The chain runs to 339 residues: Dihydroorotate dehydrogenase (quinone) (339 aa).

FMN contacts are provided by residues 62–66 (AGMDK) and Thr-86. Position 66 (Lys-66) interacts with substrate. 111-115 (NRMGF) contacts substrate. FMN-binding residues include Asn-139 and Asn-172. Asn-172 is a substrate binding site. The Nucleophile role is filled by Ser-175. Asn-177 is a binding site for substrate. FMN contacts are provided by Lys-217 and Thr-245. 246 to 247 (NT) is a substrate binding site. Residues Gly-268, Gly-297, and 318–319 (YS) contribute to the FMN site.

Belongs to the dihydroorotate dehydrogenase family. Type 2 subfamily. Monomer. The cofactor is FMN.

It is found in the cell membrane. The catalysed reaction is (S)-dihydroorotate + a quinone = orotate + a quinol. Its pathway is pyrimidine metabolism; UMP biosynthesis via de novo pathway; orotate from (S)-dihydroorotate (quinone route): step 1/1. Functionally, catalyzes the conversion of dihydroorotate to orotate with quinone as electron acceptor. This Shewanella oneidensis (strain ATCC 700550 / JCM 31522 / CIP 106686 / LMG 19005 / NCIMB 14063 / MR-1) protein is Dihydroorotate dehydrogenase (quinone).